The sequence spans 510 residues: Fumarate hydratase, mitochondrial (510 aa).

Residues 1–44 (MYRALWLLARSRRLVRPPASALASAPGLSGAAVPSFWPPNAARM) constitute a mitochondrion transit peptide. An N6-acetyllysine; alternate mark is found at lysine 61, lysine 66, and lysine 80. N6-succinyllysine; alternate occurs at positions 61, 66, and 80. Phosphothreonine is present on residues threonine 85 and threonine 90. Position 94 is an N6-acetyllysine (lysine 94). N6-acetyllysine; alternate is present on residues lysine 115 and lysine 122. N6-succinyllysine; alternate is present on residues lysine 115 and lysine 122. Substrate contacts are provided by residues 145 to 147 (SGT), 176 to 179 (HPND), and 186 to 188 (SSN). Lysine 213 is modified (N6-acetyllysine). Lysine 223 carries the N6-acetyllysine; alternate modification. Lysine 223 is modified (N6-succinyllysine; alternate). Threonine 234 is a substrate binding site. The active-site Proton donor/acceptor is histidine 235. The residue at position 236 (threonine 236) is a Phosphothreonine. Lysine 256 is modified (N6-acetyllysine). Residue lysine 292 is modified to N6-acetyllysine; alternate. Position 292 is an N6-succinyllysine; alternate (lysine 292). Serine 365 is an active-site residue. Substrate contacts are provided by residues serine 366 and 371-373 (KVN). Serine 366 is modified (phosphoserine). N6-succinyllysine occurs at positions 467 and 473. Lysine 502 carries the post-translational modification N6-acetyllysine.

The protein belongs to the class-II fumarase/aspartase family. Fumarase subfamily. In terms of assembly, homotetramer. Interacts with H2AZ1. Phosphorylation at Thr-236 by PRKDC in response to DNA damage promotes translocation to the nucleus and recruitment to DNA double-strand breaks (DSBs).

It localises to the mitochondrion. The protein localises to the cytoplasm. The protein resides in the cytosol. It is found in the nucleus. Its subcellular location is the chromosome. It carries out the reaction (S)-malate = fumarate + H2O. It participates in carbohydrate metabolism; tricarboxylic acid cycle; (S)-malate from fumarate: step 1/1. Functionally, catalyzes the reversible stereospecific interconversion of fumarate to L-malate. Experiments in other species have demonstrated that specific isoforms of this protein act in defined pathways and favor one direction over the other. Its function is as follows. Catalyzes the hydration of fumarate to L-malate in the tricarboxylic acid (TCA) cycle to facilitate a transition step in the production of energy in the form of NADH. Catalyzes the dehydration of L-malate to fumarate. Fumarate metabolism in the cytosol plays a role during urea cycle and arginine metabolism; fumarate being a by-product of the urea cycle and amino-acid catabolism. Also plays a role in DNA repair by promoting non-homologous end-joining (NHEJ). In response to DNA damage and phosphorylation by PRKDC, translocates to the nucleus and accumulates at DNA double-strand breaks (DSBs): acts by catalyzing formation of fumarate, an inhibitor of KDM2B histone demethylase activity, resulting in enhanced dimethylation of histone H3 'Lys-36' (H3K36me2). In Macaca fascicularis (Crab-eating macaque), this protein is Fumarate hydratase, mitochondrial.